We begin with the raw amino-acid sequence, 130 residues long: Small ribosomal subunit protein uS8 (130 aa).

It belongs to the universal ribosomal protein uS8 family.

The polypeptide is Small ribosomal subunit protein uS8 (RPS22A) (Eremothecium gossypii (strain ATCC 10895 / CBS 109.51 / FGSC 9923 / NRRL Y-1056) (Yeast)).